The sequence spans 386 residues: 3-ketosteroid-9-alpha-monooxygenase, oxygenase component (386 aa).

A Rieske domain is found at 26 to 128; it reads WHCLGVAKDY…TDVRSGLLFV (103 aa). [2Fe-2S] cluster contacts are provided by Cys67, His69, Cys86, and His89. Positions 175, 181, 186, and 304 each coordinate Fe cation.

Homotrimer. The two-component system 3-ketosteroid-9-alpha-monooxygenase is composed of an oxygenase component KshA and a reductase component KshB. Requires [2Fe-2S] cluster as cofactor. It depends on Fe cation as a cofactor.

The catalysed reaction is androsta-1,4-diene-3,17-dione + 2 reduced [2Fe-2S]-[ferredoxin] + O2 + 2 H(+) = 9alpha-hydroxyandrosta-1,4-diene-3,17-dione + 2 oxidized [2Fe-2S]-[ferredoxin] + H2O. It catalyses the reaction androst-4-ene-3,17-dione + NADH + O2 + H(+) = 9alpha-hydroxy-androst-4-ene-3,17-dione + NAD(+) + H2O. The enzyme catalyses 3-oxochol-4-en-22-oate + NADH + O2 + H(+) = 9alpha-hydroxy-3-oxochol-4-en-22-oate + NAD(+) + H2O. It carries out the reaction 3-oxochola-1,4-dien-22-oate + NADH + O2 + H(+) = 9alpha-hydroxy-3-oxochola-1,4-dien-22-oate + NAD(+) + H2O. The catalysed reaction is 3-oxochol-4-en-22-oyl-CoA + NADH + O2 + H(+) = 9alpha-hydroxy-3-oxochol-4-en-22-oyl-CoA + NAD(+) + H2O. It catalyses the reaction 3-oxochola-1,4-dien-22-oyl-CoA + NADH + O2 + H(+) = 9alpha-hydroxy-3-oxochola-1,4-dien-22-oyl-CoA + NAD(+) + H2O. It functions in the pathway lipid metabolism; steroid biosynthesis. In terms of biological role, involved in the degradation of cholesterol. Catalyzes the introduction of a 9a-hydroxyl moiety into 1,4-androstadiene-3,17-dione (ADD) to yield the 9alpha-hydroxy-1,4-androstadiene-3,17-dione (9OHADD) intermediate which spontaneously form 3-hydroxy-9,10-seconandrost-1,3,5(10)-triene-9,17-dione (HSA) via the meta-cleavage of ring B with concomitant aromatization of ring A. KSH is also able to use 4-androstene-3,17-dione (AD), 3-oxo-23,24-bisnorcholesta-4-en-22-oate (4-BNC), 3-oxo-23,24-bisnorcholesta-1,4-dien-22-oate (1,4-BNC), 3-oxo-23,24-bisnorcholesta-4-en-22-oyl-coenzyme A thioester (4-BNC-CoA) and 3-oxo-23,24-bisnorcholesta-1,4-dien-22-oyl-coenzyme A thioester (1,4-BNC-CoA) as substrates. The sequence is that of 3-ketosteroid-9-alpha-monooxygenase, oxygenase component (kshA) from Mycobacterium tuberculosis (strain ATCC 25618 / H37Rv).